We begin with the raw amino-acid sequence, 411 residues long: MAEKTEKPTAKKLRDAAKKGQTFKARDIVALIVIATGALAAPALVDLTRIAAEFVRIASTGAQPNPGAYAFAWAKLFLRIAAPFVLLCAAAGALPSLVQSRFTLAVESIRFDLTALDPVKGMKRLFSWRSAKDAVKALLYVGVFALTVRVFAGLYHADVFGLFRARPALLGHMWIVLTVRLVLLFLLCALPVLILDAAVEYFLYHRELKMDKHEVKQEYKESEGNHEIKSKRREIHQELLSEEIKANVEQSDFIVANPTHIAIGVYVNPDIVPIPFVSVRETNARALAVIRHAEACGVPVVRNVALARSIYRNSPRRYSFVSHDDIDGVMRVLIWLGEVEAANRGGPPPETRAPTSAEPQARDGVAPPGDACADNAFPDDAPPGAAAPNAGSPDGPAPDGGAPARTGDQNA.

Transmembrane regions (helical) follow at residues 28–48 (IVAL…VDLT), 80–100 (IAAP…LVQS), 137–157 (ALLY…LYHA), and 175–195 (IVLT…VLIL). The disordered stretch occupies residues 341–411 (AANRGGPPPE…APARTGDQNA (71 aa)). Positions 370 to 404 (DACADNAFPDDAPPGAAAPNAGSPDGPAPDGGAPA) are enriched in low complexity.

Belongs to the type III secretion exporter family.

Its subcellular location is the cell membrane. Functionally, part of the bsa type III secretion system, is involved in the intracellular replication of invading bacteria inside the host cell. Probably necessary for the lysis of the vacuole membrane and escape into the host cell cytoplasm. This is Secretion apparatus protein BsaZ (bsaZ) from Burkholderia pseudomallei (strain 1026b).